The primary structure comprises 141 residues: Putative nickel-responsive regulator (141 aa).

Residues His-80, His-91, His-93, and Cys-99 each contribute to the Ni(2+) site.

The protein belongs to the transcriptional regulatory CopG/NikR family. The cofactor is Ni(2+).

Its function is as follows. Transcriptional regulator. The sequence is that of Putative nickel-responsive regulator from Methanococcus maripaludis (strain C7 / ATCC BAA-1331).